The sequence spans 78 residues: Small, acid-soluble spore protein Tlp (78 aa).

The interval 32 to 78 (SEEQLSFASEAEQEQIREKNERRNESIEAMRNEIHDEAEARKNGYHQ) is disordered. Over residues 45–78 (EQIREKNERRNESIEAMRNEIHDEAEARKNGYHQ) the composition is skewed to basic and acidic residues.

Belongs to the Tlp family.

Its subcellular location is the spore core. This is Small, acid-soluble spore protein Tlp from Bacillus licheniformis (strain ATCC 14580 / DSM 13 / JCM 2505 / CCUG 7422 / NBRC 12200 / NCIMB 9375 / NCTC 10341 / NRRL NRS-1264 / Gibson 46).